The following is a 553-amino-acid chain: 5'-nucleotidase domain-containing protein 2 (553 aa).

Residues 26-51 (SSSPSCPGCGPPGPGAHCPSTPRSAP) are disordered. D106 (nucleophile) is an active-site residue. Residues D106, D108, and D391 each contribute to the Mg(2+) site. D108 functions as the Proton donor in the catalytic mechanism.

Belongs to the 5'(3')-deoxyribonucleotidase family. In terms of assembly, interacts with tyrosine 3-monooxygenase TH; the interaction results in reduced phosphorylation and decreased catalytic activity of TH. In terms of tissue distribution, expressed in eye iridocorneal angle.

The protein resides in the cytoplasm. Functionally, promotes dephosphorylation of tyrosine 3-monooxygenase TH which decreases TH catalytic activity and leads to reduced synthesis of catecholamines including dopamine, noradrenaline and adrenaline. The exact mechanism of activity is unknown but may act as a phosphatase or promote the activity of phosphatases or may inhibit phosphorylation by acting as a barrier to interfere with protein kinase access. This Rattus norvegicus (Rat) protein is 5'-nucleotidase domain-containing protein 2 (Nt5dc2).